A 178-amino-acid polypeptide reads, in one-letter code: Large ribosomal subunit protein bL25 (178 aa).

It belongs to the bacterial ribosomal protein bL25 family. CTC subfamily. Part of the 50S ribosomal subunit; part of the 5S rRNA/L5/L18/L25 subcomplex. Contacts the 5S rRNA. Binds to the 5S rRNA independently of L5 and L18.

Its function is as follows. This is one of the proteins that binds to the 5S RNA in the ribosome where it forms part of the central protuberance. This is Large ribosomal subunit protein bL25 from Helicobacter acinonychis (strain Sheeba).